The primary structure comprises 957 residues: ADAMTS-like protein 2 (957 aa).

The signal sequence occupies residues 1 to 29 (MDGRRQHPHWAWSLLAVAVVAGGAAPTEA). The region spanning 47-106 (AYWWGEWTKWTACSRSCGGGVTSQERHCLQQRRKSVPGTGNRTCVGTSKRYQLCRVQECP) is the TSP type-1 1 domain. 3 disulfides stabilise this stretch: Cys-59-Cys-100, Cys-63-Cys-105, and Cys-74-Cys-90. 8 N-linked (GlcNAc...) asparagine glycosylation sites follow: Asn-87, Asn-374, Asn-435, Asn-482, Asn-518, Asn-530, Asn-539, and Asn-550. A compositionally biased stretch (polar residues) spans 532-544 (SSEAPFPNTSASP). Residues 532–568 (SSEAPFPNTSASPPNLAGNRTHKARTRPKARKQGVSP) form a disordered region. A compositionally biased stretch (basic residues) spans 551 to 563 (RTHKARTRPKARK). TSP type-1 domains are found at residues 570-624 (DMYR…EFCA), 628-692 (CQPR…PACG), 694-742 (QWEM…TGPP), 743-801 (CDRQ…KNCP), 803-857 (HWLA…TCFE), and 859-914 (PCFK…QPCP). The N-linked (GlcNAc...) asparagine glycan is linked to Asn-737. N-linked (GlcNAc...) asparagine glycosylation is present at Asn-813. The PLAC domain occupies 918-956 (PDDSCQDQPGTNCALAIKVNLCGHWYYSKACCRSCRPPH).

Interacts with LTBP1. Post-translationally, glycosylated. Can be O-fucosylated by POFUT2 on a serine or a threonine residue found within the consensus sequence C1-X(2)-(S/T)-C2-G of the TSP type-1 repeat domains where C1 and C2 are the first and second cysteine residue of the repeat, respectively. Fucosylated repeats can then be further glycosylated by the addition of a beta-1,3-glucose residue by the glucosyltransferase, B3GALTL. Fucosylation mediates the efficient secretion of ADAMTS family members. Can also be C-glycosylated with one or two mannose molecules on tryptophan residues within the consensus sequence W-X-X-W of the TPRs, and N-glycosylated. These other glycosylations can also facilitate secretion.

It localises to the secreted. This Mus musculus (Mouse) protein is ADAMTS-like protein 2 (Adamtsl2).